The primary structure comprises 163 residues: Acetolactate synthase small subunit (163 aa).

The 76-residue stretch at 4-79 (ILSVLLENES…VFKVVNLSEQ (76 aa)) folds into the ACT domain.

This sequence belongs to the acetolactate synthase small subunit family. As to quaternary structure, dimer of large and small chains.

The catalysed reaction is 2 pyruvate + H(+) = (2S)-2-acetolactate + CO2. Its pathway is amino-acid biosynthesis; L-isoleucine biosynthesis; L-isoleucine from 2-oxobutanoate: step 1/4. The protein operates within amino-acid biosynthesis; L-valine biosynthesis; L-valine from pyruvate: step 1/4. This Haemophilus influenzae (strain ATCC 51907 / DSM 11121 / KW20 / Rd) protein is Acetolactate synthase small subunit (ilvH).